Consider the following 391-residue polypeptide: D-xylose 1-dehydrogenase (NADP(+)) (391 aa).

It belongs to the Gfo/Idh/MocA family.

It carries out the reaction D-xylose + NADP(+) = D-xylono-1,5-lactone + NADPH + H(+). Its function is as follows. NADP-dependent D-xylose dehydrogenase catalyzing the oxydation of D-xylose into D-xylonolactone. Also displays some, albeit lower activity with D-glucose, D-galactose and L-arabinose as substrate. Probably not involved in D-xylose degradation, as it has been shown that H.jecorina assimilates D-xylose via D-xylose reductase and xylitol dehydrogenase, and it is unable to grow on D-xylonic acid as sole carbon source. May play a role in the regeneration of NADP(+) in the presence of D-xylose. This chain is D-xylose 1-dehydrogenase (NADP(+)), found in Hypocrea jecorina (strain ATCC 56765 / BCRC 32924 / NRRL 11460 / Rut C-30) (Trichoderma reesei).